Here is a 209-residue protein sequence, read N- to C-terminus: Thymidylate kinase (209 aa).

10–17 (GLDGAGKS) serves as a coordination point for ATP.

This sequence belongs to the thymidylate kinase family.

The catalysed reaction is dTMP + ATP = dTDP + ADP. In terms of biological role, phosphorylation of dTMP to form dTDP in both de novo and salvage pathways of dTTP synthesis. This Francisella tularensis subsp. holarctica (strain OSU18) protein is Thymidylate kinase.